A 231-amino-acid polypeptide reads, in one-letter code: Large ribosomal subunit protein uL1 (231 aa).

This sequence belongs to the universal ribosomal protein uL1 family. As to quaternary structure, part of the 50S ribosomal subunit.

Functionally, binds directly to 23S rRNA. The L1 stalk is quite mobile in the ribosome, and is involved in E site tRNA release. Its function is as follows. Protein L1 is also a translational repressor protein, it controls the translation of the L11 operon by binding to its mRNA. In Polaromonas naphthalenivorans (strain CJ2), this protein is Large ribosomal subunit protein uL1.